The primary structure comprises 201 residues: uncharacterized protein (201 aa).

The interval 121–141 (HHRTRPGRGPGPRPGGSAMAG) is disordered.

This is an uncharacterized protein from Mycobacterium tuberculosis (strain ATCC 25618 / H37Rv).